We begin with the raw amino-acid sequence, 427 residues long: Homogentisate 1,2-dioxygenase (427 aa).

His285 (proton acceptor) is an active-site residue. 2 residues coordinate Fe cation: His328 and Glu334. Homogentisate contacts are provided by Tyr343 and His364. His364 contacts Fe cation.

It belongs to the homogentisate dioxygenase family. In terms of assembly, hexamer; dimer of trimers. The cofactor is Fe cation.

It catalyses the reaction homogentisate + O2 = 4-maleylacetoacetate + H(+). It participates in amino-acid degradation; L-phenylalanine degradation; acetoacetate and fumarate from L-phenylalanine: step 4/6. Its function is as follows. Involved in the catabolism of homogentisate (2,5-dihydroxyphenylacetate or 2,5-OH-PhAc), a central intermediate in the degradation of phenylalanine and tyrosine. Catalyzes the oxidative ring cleavage of the aromatic ring of homogentisate to yield maleylacetoacetate. In Caulobacter sp. (strain K31), this protein is Homogentisate 1,2-dioxygenase.